Here is a 224-residue protein sequence, read N- to C-terminus: Type VII secretion system protein EsaE (224 aa).

Interacts with EssD.

In terms of biological role, component of the type VII secretion system (Ess). Plays a role in Esx protein secretion. Plays an essential role in the processing and secretion of EssD. The sequence is that of Type VII secretion system protein EsaE from Staphylococcus aureus (strain USA300).